Reading from the N-terminus, the 185-residue chain is Lipid A acyltransferase PagP (185 aa).

Residues 1–14 (MKLKPVLYLLMLLG) form the signal peptide. Cys-15 is lipidated: N-palmitoyl cysteine. The S-diacylglycerol cysteine moiety is linked to residue Cys-15. Active-site residues include His-57, Asp-100, and Ser-101.

The protein belongs to the lipid A palmitoyltransferase family. Homodimer.

It is found in the cell outer membrane. The catalysed reaction is a lipid A + a 1,2-diacyl-sn-glycero-3-phosphocholine = a hepta-acyl lipid A + a 2-acyl-sn-glycero-3-phosphocholine. The enzyme catalyses a lipid IVA + a 1,2-diacyl-sn-glycero-3-phosphocholine = a lipid IVB + a 2-acyl-sn-glycero-3-phosphocholine. It catalyses the reaction a lipid IIA + a 1,2-diacyl-sn-glycero-3-phosphocholine = a lipid IIB + a 2-acyl-sn-glycero-3-phosphocholine. Its function is as follows. Transfers a fatty acid residue from the sn-1 position of a phospholipid to the N-linked hydroxyfatty acid chain on the proximal unit of lipid A or its precursors. The protein is Lipid A acyltransferase PagP of Erwinia sp. (strain Ejp617).